The primary structure comprises 128 residues: Sulfurtransferase TusD (128 aa).

The Cysteine persulfide intermediate role is filled by cysteine 78.

This sequence belongs to the DsrE/TusD family. As to quaternary structure, heterohexamer, formed by a dimer of trimers. The hexameric TusBCD complex contains 2 copies each of TusB, TusC and TusD. The TusBCD complex interacts with TusE.

The protein localises to the cytoplasm. In terms of biological role, part of a sulfur-relay system required for 2-thiolation of 5-methylaminomethyl-2-thiouridine (mnm(5)s(2)U) at tRNA wobble positions. Accepts sulfur from TusA and transfers it in turn to TusE. The sequence is that of Sulfurtransferase TusD from Salmonella newport (strain SL254).